The primary structure comprises 449 residues: UDP-N-acetylmuramoylalanine--D-glutamate ligase (449 aa).

118–124 (GTNGKTT) contacts ATP.

The protein belongs to the MurCDEF family.

Its subcellular location is the cytoplasm. The catalysed reaction is UDP-N-acetyl-alpha-D-muramoyl-L-alanine + D-glutamate + ATP = UDP-N-acetyl-alpha-D-muramoyl-L-alanyl-D-glutamate + ADP + phosphate + H(+). Its pathway is cell wall biogenesis; peptidoglycan biosynthesis. In terms of biological role, cell wall formation. Catalyzes the addition of glutamate to the nucleotide precursor UDP-N-acetylmuramoyl-L-alanine (UMA). This chain is UDP-N-acetylmuramoylalanine--D-glutamate ligase, found in Staphylococcus aureus (strain MW2).